The following is a 125-amino-acid chain: Barwin (125 aa).

Q1 is subject to Pyrrolidone carboxylic acid. Residues 1–125 (QQANDVRATY…VNYQFVDCRD (125 aa)) form the Barwin domain. 3 disulfide bridges follow: C31-C63, C52-C86, and C66-C123.

In terms of biological role, may be involved in a defense mechanism. Probable plant lectin. Binds weakly a chitin analog. This is Barwin from Hordeum vulgare (Barley).